A 428-amino-acid polypeptide reads, in one-letter code: Hydrolase acrC (428 aa).

S248 is a catalytic residue.

This sequence belongs to the AB hydrolase superfamily. FUS2 hydrolase family.

The protein operates within secondary metabolite biosynthesis. In terms of biological role, hydrolase; part of the cluster that mediates the biosynthesis of acurin A, a highly reduced polyketide coupled to a serine via a peptide bond. The activities of the highly reducing polyketide synthase acrA and the nonribosomal peptide synthetase acrB are collectively responsible for the synthesis of the acurin A core structure with a heptaketide backbone produced by acrA covalently fused to a L-serine by acrB. After the formation of the PK-NRP hybrid product, it is detached from acrB by reductive release to set up the formation of the lactam ring by aldol condensation. The hydrolyase acrC then catalyzes water loss to generate a double bond in the ring. This double bond is probably reduced, which is followed by three oxidations at C-22 to generate the carboxylic acid moiety, involving probably the FAD-binding monooxygenase acrE and the cytochrome P450 monooxygenases acrD and acrF. Finally, a last methylation step performed by the O-methyltransferase acrG leads to the production of acurin A. This Aspergillus aculeatus (strain ATCC 16872 / CBS 172.66 / WB 5094) protein is Hydrolase acrC.